We begin with the raw amino-acid sequence, 418 residues long: Inner capsid protein sigma-2 (418 aa).

The protein belongs to the orthoreovirus sigma-1 protein family. As to quaternary structure, interacts with protein mu-NS; in viral inclusions.

The protein localises to the virion. Its function is as follows. Inner capsid (core) component. This Mammalia (T1L) protein is Inner capsid protein sigma-2 (S2).